Consider the following 486-residue polypeptide: Bifunctional protein GlmU (486 aa).

Residues 1 to 236 (MTDQNLAIVV…SWLVDGINDR (236 aa)) form a pyrophosphorylase region. Residues 11–14 (LAAG), K25, Q78, and 83–84 (GT) each bind UDP-N-acetyl-alpha-D-glucosamine. Position 109 (D109) interacts with Mg(2+). Residues G146, E161, N176, and N234 each contribute to the UDP-N-acetyl-alpha-D-glucosamine site. N234 contributes to the Mg(2+) binding site. The interval 237 to 257 (AQLSEAAAKLNALTVRAWQLA) is linker. Residues 258 to 486 (GVTVQDPATT…ASNAAEESGE (229 aa)) are N-acetyltransferase. R339 and K357 together coordinate UDP-N-acetyl-alpha-D-glucosamine. H369 functions as the Proton acceptor in the catalytic mechanism. 2 residues coordinate UDP-N-acetyl-alpha-D-glucosamine: Y372 and N383. Acetyl-CoA-binding positions include A386, 392–393 (NY), and A429. The disordered stretch occupies residues 459-486 (RRPGTDAARAAQRNGAAEASNAAEESGE). The segment covering 465 to 486 (AARAAQRNGAAEASNAAEESGE) has biased composition (low complexity).

It in the N-terminal section; belongs to the N-acetylglucosamine-1-phosphate uridyltransferase family. In the C-terminal section; belongs to the transferase hexapeptide repeat family. Homotrimer. Requires Mg(2+) as cofactor.

It localises to the cytoplasm. The catalysed reaction is alpha-D-glucosamine 1-phosphate + acetyl-CoA = N-acetyl-alpha-D-glucosamine 1-phosphate + CoA + H(+). It carries out the reaction N-acetyl-alpha-D-glucosamine 1-phosphate + UTP + H(+) = UDP-N-acetyl-alpha-D-glucosamine + diphosphate. Its pathway is nucleotide-sugar biosynthesis; UDP-N-acetyl-alpha-D-glucosamine biosynthesis; N-acetyl-alpha-D-glucosamine 1-phosphate from alpha-D-glucosamine 6-phosphate (route II): step 2/2. It participates in nucleotide-sugar biosynthesis; UDP-N-acetyl-alpha-D-glucosamine biosynthesis; UDP-N-acetyl-alpha-D-glucosamine from N-acetyl-alpha-D-glucosamine 1-phosphate: step 1/1. The protein operates within bacterial outer membrane biogenesis; LPS lipid A biosynthesis. Catalyzes the last two sequential reactions in the de novo biosynthetic pathway for UDP-N-acetylglucosamine (UDP-GlcNAc). The C-terminal domain catalyzes the transfer of acetyl group from acetyl coenzyme A to glucosamine-1-phosphate (GlcN-1-P) to produce N-acetylglucosamine-1-phosphate (GlcNAc-1-P), which is converted into UDP-GlcNAc by the transfer of uridine 5-monophosphate (from uridine 5-triphosphate), a reaction catalyzed by the N-terminal domain. The sequence is that of Bifunctional protein GlmU from Leifsonia xyli subsp. xyli (strain CTCB07).